The following is a 415-amino-acid chain: Dihydroorotase (415 aa).

2 residues coordinate Zn(2+): His54 and His56. Residues 56 to 58 (HFR) and Asn88 each bind substrate. Residues Lys136, His169, His217, and Asp278 each coordinate Zn(2+). At Lys136 the chain carries N6-carboxylysine. The active site involves Asp278. His282 is a substrate binding site.

The protein belongs to the metallo-dependent hydrolases superfamily. DHOase family. Class I DHOase subfamily. It depends on Zn(2+) as a cofactor.

The enzyme catalyses (S)-dihydroorotate + H2O = N-carbamoyl-L-aspartate + H(+). Its pathway is pyrimidine metabolism; UMP biosynthesis via de novo pathway; (S)-dihydroorotate from bicarbonate: step 3/3. Catalyzes the reversible cyclization of carbamoyl aspartate to dihydroorotate. This is Dihydroorotase from Thermoplasma volcanium (strain ATCC 51530 / DSM 4299 / JCM 9571 / NBRC 15438 / GSS1).